Here is a 271-residue protein sequence, read N- to C-terminus: Calcium-binding protein 4 (271 aa).

The segment at 1–105 is disordered; it reads MATEHNVQLV…RSDPQQDAAQ (105 aa). Ser-37 is subject to Phosphoserine; by PKC/PRKCZ. A compositionally biased stretch (low complexity) spans 45 to 67; sequence GSQKASSGDQSSSQGSEASGSSK. Residues 87–96 show a composition bias toward basic residues; it reads ASHRHSHRHR. EF-hand domains follow at residues 125–160, 179–196, 202–237, and 239–271; these read EELEELQAAFEEFDTDQDGYIGYRELGDCMRTLGYM, GFVDFEEFVELISPKLRE, LGVRELRIAFREFDKDRDGRITVAELRQAAPALLGE, and LEGTELDEMLREMDLNGDGTIDFDEFVMMLSTG. Ca(2+) is bound by residues Asp-138, Asp-140, Asp-142, Tyr-144, and Glu-149. Positions 215, 217, 219, 221, 226, 252, 254, 256, 258, and 263 each coordinate Ca(2+).

In terms of assembly, interacts with CACNA1F and CACNA1D (via IQ domain) in a calcium independent manner. Interacts (via N-terminus) with UNC119. Phosphorylated. Phosphorylation levels change with the light conditions and regulate the activity, but has no effect on calcium binding. Expressed in retina and in the inner hair cells (IHC) of the cochlea.

It is found in the cytoplasm. The protein localises to the presynapse. Its function is as follows. Involved in normal synaptic function through regulation of Ca(2+) influx and neurotransmitter release in photoreceptor synaptic terminals and in auditory transmission. Modulator of CACNA1D and CACNA1F, suppressing the calcium-dependent inactivation and shifting the activation range to more hyperpolarized voltages. The protein is Calcium-binding protein 4 (Cabp4) of Mus musculus (Mouse).